We begin with the raw amino-acid sequence, 444 residues long: DNA repair protein RadA (444 aa).

The C4-type zinc finger occupies 10–27; the sequence is CQECGYKSVKWLGKCPSC. 91-98 lines the ATP pocket; sequence GEPGIGKS. The short motif at 247-251 is the RadA KNRFG motif element; sequence KNRFG. The lon-protease-like stretch occupies residues 345 to 444; sequence DVFVNVAGGM…HIQEAIEVLF (100 aa).

The protein belongs to the RecA family. RadA subfamily.

Functionally, DNA-dependent ATPase involved in processing of recombination intermediates, plays a role in repairing DNA breaks. Stimulates the branch migration of RecA-mediated strand transfer reactions, allowing the 3' invading strand to extend heteroduplex DNA faster. Binds ssDNA in the presence of ADP but not other nucleotides, has ATPase activity that is stimulated by ssDNA and various branched DNA structures, but inhibited by SSB. Does not have RecA's homology-searching function. This is DNA repair protein RadA from Aquifex aeolicus (strain VF5).